The chain runs to 348 residues: D-erythrose-4-phosphate dehydrogenase (348 aa).

Residues 12 to 13 (RI) and Arg-81 contribute to the NAD(+) site. Substrate contacts are provided by residues 154-156 (SCT), Arg-200, 213-214 (TK), and Arg-236. Cys-155 acts as the Nucleophile in catalysis. Asn-318 lines the NAD(+) pocket.

Belongs to the glyceraldehyde-3-phosphate dehydrogenase family. Epd subfamily. In terms of assembly, homotetramer.

Its subcellular location is the cytoplasm. The catalysed reaction is D-erythrose 4-phosphate + NAD(+) + H2O = 4-phospho-D-erythronate + NADH + 2 H(+). Its pathway is cofactor biosynthesis; pyridoxine 5'-phosphate biosynthesis; pyridoxine 5'-phosphate from D-erythrose 4-phosphate: step 1/5. Catalyzes the NAD-dependent conversion of D-erythrose 4-phosphate to 4-phosphoerythronate. The sequence is that of D-erythrose-4-phosphate dehydrogenase from Salmonella paratyphi B (strain ATCC BAA-1250 / SPB7).